A 416-amino-acid polypeptide reads, in one-letter code: D-amino acid dehydrogenase (416 aa).

3-17 contacts FAD; that stretch reads ITILGSGVIGVTTAY.

This sequence belongs to the DadA oxidoreductase family. Requires FAD as cofactor.

The enzyme catalyses a D-alpha-amino acid + A + H2O = a 2-oxocarboxylate + AH2 + NH4(+). It functions in the pathway amino-acid degradation; D-alanine degradation; NH(3) and pyruvate from D-alanine: step 1/1. Oxidative deamination of D-amino acids. The chain is D-amino acid dehydrogenase from Brucella anthropi (strain ATCC 49188 / DSM 6882 / CCUG 24695 / JCM 21032 / LMG 3331 / NBRC 15819 / NCTC 12168 / Alc 37) (Ochrobactrum anthropi).